The chain runs to 183 residues: Phosphopantetheine adenylyltransferase (183 aa).

Residue serine 8 participates in substrate binding. Residues 8-9 (SF) and histidine 16 contribute to the ATP site. Positions 40, 72, and 86 each coordinate substrate. ATP is bound by residues 87 to 89 (GLR), glutamate 97, and 122 to 128 (YSFLSSS).

The protein belongs to the bacterial CoaD family. In terms of assembly, homohexamer. Mg(2+) serves as cofactor.

The protein resides in the cytoplasm. The catalysed reaction is (R)-4'-phosphopantetheine + ATP + H(+) = 3'-dephospho-CoA + diphosphate. The protein operates within cofactor biosynthesis; coenzyme A biosynthesis; CoA from (R)-pantothenate: step 4/5. Its function is as follows. Reversibly transfers an adenylyl group from ATP to 4'-phosphopantetheine, yielding dephospho-CoA (dPCoA) and pyrophosphate. The chain is Phosphopantetheine adenylyltransferase from Nostoc punctiforme (strain ATCC 29133 / PCC 73102).